Consider the following 374-residue polypeptide: Anhydro-N-acetylmuramic acid kinase (374 aa).

12 to 19 (GTSLDGID) provides a ligand contact to ATP.

Belongs to the anhydro-N-acetylmuramic acid kinase family.

The enzyme catalyses 1,6-anhydro-N-acetyl-beta-muramate + ATP + H2O = N-acetyl-D-muramate 6-phosphate + ADP + H(+). It functions in the pathway amino-sugar metabolism; 1,6-anhydro-N-acetylmuramate degradation. Its pathway is cell wall biogenesis; peptidoglycan recycling. Its function is as follows. Catalyzes the specific phosphorylation of 1,6-anhydro-N-acetylmuramic acid (anhMurNAc) with the simultaneous cleavage of the 1,6-anhydro ring, generating MurNAc-6-P. Is required for the utilization of anhMurNAc either imported from the medium or derived from its own cell wall murein, and thus plays a role in cell wall recycling. In Sodalis glossinidius (strain morsitans), this protein is Anhydro-N-acetylmuramic acid kinase.